Consider the following 162-residue polypeptide: B-box zinc finger protein 23 (162 aa).

The Zn(2+) site is built by C5, C8, C28, H33, C63, C66, C86, and H91. The B box-type 1; atypical zinc-finger motif lies at 5 to 47 (CEVCEKAEAEVLCCSDEAVLCKPCDIKVHEANKLFQRHHRVAL). The B box-type 2; atypical zinc-finger motif lies at 63–101 (CDICQERKGYFFCLEDRAMLCNDCDEAIHTCNSHQRFLL). Residues 137-162 (QYSSEETEAGNSGEIVHKNPSVILSP) are disordered.

It localises to the nucleus. Its function is as follows. Probable transcription factor that may be involved in seedling photomorphogenesis. The chain is B-box zinc finger protein 23 from Arabidopsis thaliana (Mouse-ear cress).